An 855-amino-acid polypeptide reads, in one-letter code: MICAL-like protein 1 (855 aa).

Positions 2–108 constitute a Calponin-homology (CH) domain; it reads AGPRGALLAW…YVSQYYNHFT (107 aa). Disordered regions lie at residues 110–165, 226–253, and 269–659; these read SGQA…SSAC, GRSGTRPLSLQKQQPAAAAEAKDGEDSD, and QASS…HGFP. Positions 124–135 are enriched in low complexity; that stretch reads PAAPSPTSTSPA. Residues 163 to 226 enclose the LIM zinc-binding domain; that stretch reads SACAACGQRV…ERCTRLGLGG (64 aa). The segment covering 269 to 278 has biased composition (polar residues); the sequence is QASSEVQPHT. A phosphoserine mark is found at Ser293 and Ser307. The span at 308 to 325 shows a compositional bias: polar residues; sequence ESSALTPPTPRPRSSLQQ. 2 positions are modified to phosphothreonine: Thr313 and Thr316. The span at 356–367 shows a compositional bias: basic and acidic residues; it reads LSERMTAPRKDP. Residues 423-425 carry the NPF1 motif; it reads NPF. A compositionally biased stretch (acidic residues) spans 425–434; the sequence is FEEEEEEEEA. The segment covering 439–449 has biased composition (pro residues); sequence VPSPAPAPPET. Phosphothreonine is present on residues Thr461 and Thr463. A phosphoserine mark is found at Ser464, Ser465, Ser478, and Ser480. Residues 499-514 show a composition bias toward low complexity; it reads PSPALSVESLSSESSS. Residues 542-554 are compositionally biased toward polar residues; the sequence is PGTSANSVTPSAH. The segment covering 555-570 has biased composition (low complexity); sequence SSLSSSGELGQPSGEQ. At Ser613 the chain carries Phosphoserine. The short motif at 625–627 is the NPF2 element; the sequence is NPF. Residues 644–855 form a mediates the interaction with RAB13 and intramolecular interaction with the calponin-homology (CH) domain region; sequence KGAKPVRPPA…AKSKAPTGKS (212 aa). The bMERB domain occupies 663-810; it reads RKVQADQYIP…EEEEDKMLET (148 aa). Residues 679-703 adopt a coiled-coil conformation; it reads EMDSIERQLDALEHSGVLLEEKLRG. Ser682 and Ser732 each carry phosphoserine. The necessary and sufficient to associate with tubular recycling endosome membranes, mediate phosphatidic acid-binding and membrane tubulation stretch occupies residues 692–855; that stretch reads HSGVLLEEKL…AKSKAPTGKS (164 aa). Residues 794 to 822 are a coiled coil; it reads LDEDRQREEEEDKMLETMIKKKDFQREAE. Residues 815–826 show a composition bias toward basic and acidic residues; sequence KDFQREAESDSK. The interval 815–855 is disordered; that stretch reads KDFQREAESDSKKKGKFKTMKVLKLLGNKRDAKSKAPTGKS.

Homooligomer. Interacts (via NPF1 motif) with EHD1 (via EH domain); the interaction is direct and probably recruits EHD1 to membranes. Interacts with EHD3 (via EH domain). Interacts with RAB35 (GTP-bound form); the interaction is direct and probably recruits MICALL1 to membranes. Interacts with ACAP2; the interaction is indirect through RAB35. Interacts with RAB8A (GTP-bound form); regulates RAB8A association with recycling endosomes. Interacts with RAB13 (GTP-bound form). Interacts with ARF6 (GTP-bound form). Interacts with PACSIN2 (via the SH3 domain). Interacts with DPYSL2.

It is found in the recycling endosome membrane. Its subcellular location is the late endosome membrane. It localises to the cell projection. The protein localises to the cilium membrane. The protein resides in the cytoplasm. It is found in the cytoskeleton. Its subcellular location is the microtubule organizing center. It localises to the centrosome. The protein localises to the centriole. In terms of biological role, lipid-binding protein with higher affinity for phosphatidic acid, a lipid enriched in recycling endosome membranes. On endosome membranes, acts as a downstream effector of Rab proteins recruiting cytosolic proteins to regulate membrane tubulation. Involved in a late step of receptor-mediated endocytosis regulating for instance endocytosed-EGF receptor trafficking. Alternatively, regulates slow endocytic recycling of endocytosed proteins back to the plasma membrane. Also involved in cargo protein delivery to the plasma membrane. Plays a role in ciliogenesis coordination, recruits EHD1 to primary cilium where it is anchored to the centriole through interaction with tubulins. May indirectly play a role in neurite outgrowth. This is MICAL-like protein 1 (Micall1) from Rattus norvegicus (Rat).